The sequence spans 320 residues: MARNKIALIGSGMIGGTLAHLAGLKELGDIVLFDIADGIPQGKGLDIAQSSPVEGFDASLTGASDYSAIEGADVCIVTAGVPRKPGMSRDDLLGINLKVMEQVGAGIKKYAPNAFVICITNPLDAMVWALQKFSGLPKNKVVGMAGVLDSSRFRLFLAEEFNVSVKDITAFVLGGHGDTMVPLARYSTVAGIPLPDLIQMGWTTKEKLDQIIQRTRDGGAEIVGLLKTGSAYYAPAASAIEMAEAYLKDKKRVLPCAAHLSGQYGVKDMYVGVPTVIGAGGIERIIEIDLNKGEKEAFDKSVAAVAGLCEACINIAPSLK.

Residues 10–15 (GSGMIG) and Asp34 each bind NAD(+). Arg83 and Arg89 together coordinate substrate. Residues Asn96 and 119-121 (ITN) each bind NAD(+). The substrate site is built by Asn121 and Arg152. His176 functions as the Proton acceptor in the catalytic mechanism.

This sequence belongs to the LDH/MDH superfamily. MDH type 3 family.

It catalyses the reaction (S)-malate + NAD(+) = oxaloacetate + NADH + H(+). Functionally, catalyzes the reversible oxidation of malate to oxaloacetate. This is Malate dehydrogenase from Rhizobium meliloti (strain 1021) (Ensifer meliloti).